Consider the following 616-residue polypeptide: E3 ubiquitin-protein ligase DTX4 (616 aa).

2 consecutive WWE domains span residues 1–78 (MLLA…PVRR) and 79–155 (NYYD…RVRR). Disordered regions lie at residues 223–254 (VGKLPQPPGPGAKPLDTTGTIRGPGKTAPSQV) and 355–387 (PPPVSKSEIKSIPGVSNTSRKTTKKQAKKGKTP). Positions 375–384 (KTTKKQAKKG) are enriched in basic residues. An RING-type; atypical zinc finger spans residues 406-465 (CTICMERLTAPSGYKGPQPTVKPDLVGKLSRCGHIYHIYCLVAMYNNGNKDGSLQCPTCK).

Belongs to the Deltex family. In terms of assembly, interacts with NLRP4. In terms of tissue distribution, expressed in brain, testis, embryonic fibroblasts and thymocytes.

It localises to the cytoplasm. It carries out the reaction S-ubiquitinyl-[E2 ubiquitin-conjugating enzyme]-L-cysteine + [acceptor protein]-L-lysine = [E2 ubiquitin-conjugating enzyme]-L-cysteine + N(6)-ubiquitinyl-[acceptor protein]-L-lysine.. The protein operates within protein modification; protein ubiquitination. Functions as a ubiquitin ligase protein in vivo, mediating 'Lys48'-linked polyubiquitination and promoting degradation of TBK1, targeting to TBK1 requires interaction with NLRP4. Regulator of Notch signaling, a signaling pathway involved in cell-cell communications that regulates a broad spectrum of cell-fate determinations. This chain is E3 ubiquitin-protein ligase DTX4 (Dtx4), found in Mus musculus (Mouse).